The following is a 239-amino-acid chain: MIAFSLLCFAAVLQQSFGNVDFNSESTRRKKKQKEIVDLHNSLRRRVSPTASNMLKMEWYPEAASNAERWANTCSLNHSPDNLRVLEGIQCGESIYMSSNARTWTEIIHLWHDEYKNFVYGVGANPPGSVTGHYTQIVWYQTYRAGCAVSYCPSSAWSYFYVCQYCPSGNFQGKTATPYKLGPPCGDCPSACDNGLCTNPCTIYNKLTNCDSLLKQSSCQDDWIKSNCPASCFCRNKII.

An N-terminal signal peptide occupies residues 1 to 18 (MIAFSLLCFAAVLQQSFG). An SCP domain is found at 37-165 (VDLHNSLRRR…AWSYFYVCQY (129 aa)). Disulfide bonds link cysteine 74-cysteine 152, cysteine 91-cysteine 166, cysteine 147-cysteine 163, cysteine 185-cysteine 192, cysteine 188-cysteine 197, cysteine 201-cysteine 234, cysteine 210-cysteine 228, and cysteine 219-cysteine 232. The region spanning 201-234 (CTIYNKLTNCDSLLKQSSCQDDWIKSNCPASCFC) is the ShKT domain.

In terms of tissue distribution, expressed by the venom gland.

It is found in the secreted. Functionally, inhibits calcium-activated potassium channels (KCa1.1/KCNMA1), voltage-gated potassium channel Kv1.3/KCNA3, and the calcium release channel/ryanodine receptor (RyR). Binds specifically to type 1 RyR (RyR1) from skeletal muscle. Inhibit both the binding of ryanodine to RyR1, and RyR1's calcium-channel activity. Inhibits carbachol-induced muscle contraction and weakly blocks muscle contraction evoked by potassium. The sequence is that of Cysteine-rich venom protein natrin-1 from Naja atra (Chinese cobra).